Consider the following 688-residue polypeptide: Polyribonucleotide nucleotidyltransferase (688 aa).

Positions 484 and 490 each coordinate Mg(2+). Residues 550-609 (PTTEIFNVAPDKIIEIIGQGGRVIREIVEKFEVKIDLNKPSGEVKIMGNKERVLKTKEFI) enclose the KH domain. Residues 626–688 (DEVLEAQVKR…NKGKIALDLA (63 aa)) enclose the S1 motif domain.

Belongs to the polyribonucleotide nucleotidyltransferase family. Mg(2+) is required as a cofactor.

It localises to the cytoplasm. It catalyses the reaction RNA(n+1) + phosphate = RNA(n) + a ribonucleoside 5'-diphosphate. Its function is as follows. Involved in mRNA degradation. Catalyzes the phosphorolysis of single-stranded polyribonucleotides processively in the 3'- to 5'-direction. This is Polyribonucleotide nucleotidyltransferase from Helicobacter acinonychis (strain Sheeba).